The sequence spans 77 residues: Protein RADIALIS-like 4 (77 aa).

The SANT domain maps to 6 to 61 (MSTSSWTAREDKQFEMALAKFDKDTPDRWQKIARAVGGKSTEEVKRHYELLLRDVN).

As to expression, expressed just outside the vascular bundles in the rosette stem and the leaf traces. Not detected in floral primordia.

Its subcellular location is the nucleus. Probable transcription factor. In Arabidopsis thaliana (Mouse-ear cress), this protein is Protein RADIALIS-like 4 (RL4).